Here is a 631-residue protein sequence, read N- to C-terminus: KIF-binding protein (631 aa).

Over residues Glu-60–Cys-70 the composition is skewed to acidic residues. The disordered stretch occupies residues Glu-60–Phe-88.

This sequence belongs to the KIF-binding protein family. At 30 hpf, primarily expressed in central and peripheral neurons.

It localises to the cytoplasm. Its subcellular location is the cytoskeleton. Its function is as follows. Activator of KIF1B plus-end-directed microtubule motor activity. Required for organization of axonal microtubules, and axonal outgrowth and maintenance during peripheral and central nervous system development. The protein is KIF-binding protein (kifbp) of Danio rerio (Zebrafish).